Here is a 155-residue protein sequence, read N- to C-terminus: Polyadenylate-binding protein-interacting protein 5 (155 aa).

The PAM2-like motif lies at 7–17 (ALNPHAASYVP). Positions 66-109 (DIDMDIEYLLVTFSGLSQESITDVYLANGGDLEATIEMLNQLEI) constitute a CUE domain. The interval 114-155 (SEENLPETLDIGDISESGPSTSKSTEVAASTSSVIPNAPVSA) is disordered. Residues 130–148 (SGPSTSKSTEVAASTSSVI) are compositionally biased toward polar residues.

Specifically expressed in immature siliques.

Functionally, promotes polyploidy in dark-grown seedlings. Regulates the endocycle leading to hypocotyl elongation. The chain is Polyadenylate-binding protein-interacting protein 5 (CID5) from Arabidopsis thaliana (Mouse-ear cress).